A 591-amino-acid polypeptide reads, in one-letter code: L-fucose isomerase (591 aa).

Active-site proton acceptor residues include glutamate 337 and aspartate 361. Mn(2+) contacts are provided by glutamate 337, aspartate 361, and histidine 528.

This sequence belongs to the L-fucose isomerase family. Homohexamer. It depends on Mn(2+) as a cofactor.

The protein resides in the cytoplasm. It catalyses the reaction L-fucose = L-fuculose. The protein operates within carbohydrate degradation; L-fucose degradation; L-lactaldehyde and glycerone phosphate from L-fucose: step 1/3. In terms of biological role, converts the aldose L-fucose into the corresponding ketose L-fuculose. The sequence is that of L-fucose isomerase from Escherichia coli (strain SMS-3-5 / SECEC).